We begin with the raw amino-acid sequence, 57 residues long: Large ribosomal subunit protein bL32 (57 aa).

The span at Met1–Arg22 shows a compositional bias: basic residues. The interval Met1–Gly35 is disordered.

It belongs to the bacterial ribosomal protein bL32 family.

The protein is Large ribosomal subunit protein bL32 (rpmF) of Synechocystis sp. (strain ATCC 27184 / PCC 6803 / Kazusa).